The chain runs to 161 residues: Cytochrome c-type biogenesis protein CcmE (161 aa).

At 1–8 (MNPRRKKR) the chain is on the cytoplasmic side. Residues 9-29 (LTLAVALVFGLGATIGLMLYA) traverse the membrane as a helical; Signal-anchor for type II membrane protein segment. The Periplasmic segment spans residues 30–161 (LSQNMDLFYT…SDEQKQGRVQ (132 aa)). Heme contacts are provided by H129 and Y133.

It belongs to the CcmE/CycJ family.

It localises to the cell inner membrane. Functionally, heme chaperone required for the biogenesis of c-type cytochromes. Transiently binds heme delivered by CcmC and transfers the heme to apo-cytochromes in a process facilitated by CcmF and CcmH. The protein is Cytochrome c-type biogenesis protein CcmE of Photobacterium profundum (strain SS9).